We begin with the raw amino-acid sequence, 314 residues long: Formate-nitrite transporter (314 aa).

At 1–47 (MSKGKSKYVIDPISVKTACTSEESYIRCVEYGKGKAHYPNLSLLAKA) the chain is on the cytoplasmic side. The chain crosses the membrane as a helical span at residues 48–68 (ILAGVFVGVCAHASGIAGGHF). The Extracellular segment spans residues 69 to 78 (YYHKLREYVG). Residues 79–99 (ISMSAFVYGFTFPIAFLCIIA) form a helical membrane-spanning segment. The Cytoplasmic portion of the chain corresponds to 100–128 (TGSDLFTGNTLAVTTALLQRKVSLLQYLR). A helical transmembrane segment spans residues 129 to 149 (VMSISLFGNYLGAVSFAFFVS). The Extracellular portion of the chain corresponds to 150-185 (HLSGAYEKHTDVTKNHIFQFLNDIAEKKISHTFIQC). The helical transmembrane segment at 186–206 (ICLAIGCNIFVCLAVYFVLTI) threads the bilayer. The Cytoplasmic segment spans residues 207–211 (KDGSG). Residues 212–232 (MVFSVFFAVYAFAIAGYEHII) form a helical membrane-spanning segment. Over 233–257 (ANMYTLNLALMVEAKVTWSKVYFHN) the chain is Extracellular. A helical membrane pass occupies residues 258 to 278 (LLPTLIGNYIAGALVLACPLF). Over 279–314 (YIYRNSYRDYERTRGDGSNCGLRSLSIEMQNGSNGN) the chain is Cytoplasmic.

It belongs to the FNT transporter (TC 1.A.16) family. Homopentamer.

The protein resides in the cell membrane. It is found in the vacuole membrane. The enzyme catalyses (S)-lactate(in) + H(+)(in) = (S)-lactate(out) + H(+)(out). It catalyses the reaction formate(in) + H(+)(in) = formate(out) + H(+)(out). It carries out the reaction pyruvate(out) + H(+)(out) = pyruvate(in) + H(+)(in). The catalysed reaction is acetate(out) + H(+)(out) = acetate(in) + H(+)(in). Inhibited by the Malaria Box compound MMV007839 and its derivatives BH296 and BH267.meta. Monocarboxylate-proton symporter that mediates the efflux of the waste product lactate in the intraerythrocytic parasites; active in acidic-to-neutral pH range. Transports L-lactate. This is Formate-nitrite transporter from Plasmodium knowlesi (strain H).